The chain runs to 595 residues: MKNIRNFCIIAHIDHGKSTLADRLLEYTNTVSGKDLQDQVLDNMDLERERGITIKSHAIQMDYEMDGEKYVLNLIDTPGHVDFSYEVSRSIAACEGALLIVDAAQGIQAQTISNLYMAIENDLTIIPIVNKVDLPSAMPEEVEDQIIELLGCDRSEIIRASGKTGQGVDQILRAIVEQVPAPAGDPDAPLQCLIFDSVFNPFRGIIAYFKVVNGSIRKGDHVKFIATEKEYDADEVGVLRLDMEPRSEVKTGDVGYIISGIKTSREVKVGDTITHVAKPAKEAIAGFEEVKPMVFAGVYPIEAEDFENLRTSLEKLQLNDASLTFQPESSVALGFGFRCGFLGLLHMEIVQERLDREFNMNVITTVPNVSYKVYDKKGGCKEVHNPSGLPEPTLIDHIEEPFIRASVITNTAYIGPIMTLCLGKRGVLVKQEYISGDRVEIFYDLPLGEIVIDFYDKLKSISKGYASFDYHLHDFRESKLVKLDILLNGEPVDALSTLTHVDNSVTFGQRMCEKLKELIPRQQFEIAIQAAIGAKIIARETIKPVRKDVTAKCYGGDISRKRKLLEKQKEGKKRMKQIGTVEVPQKAFLAVLKLD.

The tr-type G domain maps to 2–183 (KNIRNFCIIA…AIVEQVPAPA (182 aa)). GTP contacts are provided by residues 14–19 (DHGKST) and 130–133 (NKVD).

It belongs to the TRAFAC class translation factor GTPase superfamily. Classic translation factor GTPase family. LepA subfamily.

It localises to the cell inner membrane. The catalysed reaction is GTP + H2O = GDP + phosphate + H(+). Required for accurate and efficient protein synthesis under certain stress conditions. May act as a fidelity factor of the translation reaction, by catalyzing a one-codon backward translocation of tRNAs on improperly translocated ribosomes. Back-translocation proceeds from a post-translocation (POST) complex to a pre-translocation (PRE) complex, thus giving elongation factor G a second chance to translocate the tRNAs correctly. Binds to ribosomes in a GTP-dependent manner. The sequence is that of Elongation factor 4 from Porphyromonas gingivalis (strain ATCC 33277 / DSM 20709 / CIP 103683 / JCM 12257 / NCTC 11834 / 2561).